Reading from the N-terminus, the 201-residue chain is Dephospho-CoA kinase (201 aa).

A DPCK domain is found at 4-201 (AFFVTASIAC…VIQEISKGNM (198 aa)). 12 to 17 (ACGKST) serves as a coordination point for ATP.

It belongs to the CoaE family.

The protein resides in the cytoplasm. It catalyses the reaction 3'-dephospho-CoA + ATP = ADP + CoA + H(+). It functions in the pathway cofactor biosynthesis; coenzyme A biosynthesis; CoA from (R)-pantothenate: step 5/5. Functionally, catalyzes the phosphorylation of the 3'-hydroxyl group of dephosphocoenzyme A to form coenzyme A. The chain is Dephospho-CoA kinase from Campylobacter jejuni subsp. jejuni serotype O:2 (strain ATCC 700819 / NCTC 11168).